Consider the following 400-residue polypeptide: MTSYSYRQSSAMSSFGGLGGGSVRFGPGVAFRAPSIHGGSGGRGVSVSSARFVSSSSSGGYGGGYGGVLTASDGLLAGNEKLTMQNLNDRLASYLDKVRALEAANGELEVKIRDWYQKQGPGPSRDYSHYYTTIQDLRDKILGATIENSRIVLQIDNARLAADDFRTKFETEQALRMSVEADINGLRRVLDELTLARADLEMQIEGLKEELAYLKKNHEEEISTLRGQVGGQVSVEVDSAPGTDLAKILSDMRSQYEVMAEQNRKDAEAWFTSRTEELNREVAGHTEQLQMSRSEVTDLRRTLQGLEIELQSQLSMKAALEDTLAETEARFGAQLAHIQALISGIEAQLGDVRADSERQNQEYQRLMDIKSRLEQEIATYRSLLEGQEDHYSNLSASKVL.

The interval 1-79 (MTSYSYRQSS…TASDGLLAGN (79 aa)) is head. R7 carries the post-translational modification Omega-N-methylarginine. Phosphoserine occurs at positions 14 and 22. Position 24 is an asymmetric dimethylarginine; alternate (R24). An Omega-N-methylarginine; alternate modification is found at R24. The residue at position 32 (R32) is an Omega-N-methylarginine. 2 positions are modified to phosphoserine: S35 and S40. An omega-N-methylarginine mark is found at R43 and R51. 2 positions are modified to phosphoserine: S57 and S72. The tract at residues 80–115 (EKLTMQNLNDRLASYLDKVRALEAANGELEVKIRDW) is coil 1A. An IF rod domain is found at 80 to 391 (EKLTMQNLND…SLLEGQEDHY (312 aa)). The linker 1 stretch occupies residues 116-133 (YQKQGPGPSRDYSHYYTT). A coil 1B region spans residues 134 to 225 (IQDLRDKILG…KNHEEEISTL (92 aa)). The tract at residues 226–248 (RGQVGGQVSVEVDSAPGTDLAKI) is linker 12. The tract at residues 244–390 (DLAKILSDMR…RSLLEGQEDH (147 aa)) is necessary for interaction with PNN. Residues 249–387 (LSDMRSQYEV…ATYRSLLEGQ (139 aa)) form a coil 2 region. Phosphothreonine is present on T323. Residues 388–400 (EDHYSNLSASKVL) form a rod-like helical tail region. Y391 carries the post-translational modification Phosphotyrosine. A Phosphoserine modification is found at S395.

It belongs to the intermediate filament family. Heterotetramer of two type I and two type II keratins. Interacts with PNN and the actin-binding domain of DMD.

Functionally, involved in the organization of myofibers. Together with KRT8, helps to link the contractile apparatus to dystrophin at the costameres of striated muscle. This is Keratin, type I cytoskeletal 19 from Pongo abelii (Sumatran orangutan).